Here is a 313-residue protein sequence, read N- to C-terminus: Porphobilinogen deaminase (313 aa).

Cysteine 241 is subject to S-(dipyrrolylmethanemethyl)cysteine.

This sequence belongs to the HMBS family. Monomer. Dipyrromethane is required as a cofactor.

The enzyme catalyses 4 porphobilinogen + H2O = hydroxymethylbilane + 4 NH4(+). It functions in the pathway porphyrin-containing compound metabolism; protoporphyrin-IX biosynthesis; coproporphyrinogen-III from 5-aminolevulinate: step 2/4. Functionally, tetrapolymerization of the monopyrrole PBG into the hydroxymethylbilane pre-uroporphyrinogen in several discrete steps. The chain is Porphobilinogen deaminase from Sulfurimonas denitrificans (strain ATCC 33889 / DSM 1251) (Thiomicrospira denitrificans (strain ATCC 33889 / DSM 1251)).